Consider the following 184-residue polypeptide: ATP-dependent protease subunit HslV (184 aa).

Residue Thr12 is part of the active site. Residues Ala166, Cys169, and Thr172 each coordinate Na(+).

The protein belongs to the peptidase T1B family. HslV subfamily. In terms of assembly, a double ring-shaped homohexamer of HslV is capped on each side by a ring-shaped HslU homohexamer. The assembly of the HslU/HslV complex is dependent on binding of ATP.

The protein resides in the cytoplasm. It carries out the reaction ATP-dependent cleavage of peptide bonds with broad specificity.. Allosterically activated by HslU binding. Its function is as follows. Protease subunit of a proteasome-like degradation complex believed to be a general protein degrading machinery. In Brucella anthropi (strain ATCC 49188 / DSM 6882 / CCUG 24695 / JCM 21032 / LMG 3331 / NBRC 15819 / NCTC 12168 / Alc 37) (Ochrobactrum anthropi), this protein is ATP-dependent protease subunit HslV.